A 347-amino-acid chain; its full sequence is DNA polymerase III subunit delta (347 aa).

Belongs to the DNA polymerase HolA subunit family. Component of the DNA clamp loading complex consisting of tau(3):delta(1):delta'(1). The DNA polymerase III holoenzyme complex contains at least 10 different subunits organized into 3 functionally essential subassemblies: the Pol III core, the beta sliding clamp processivity factor and the clamp-loading complex. The Pol III core (subunits alpha, epsilon and theta) contains the polymerase and the 3'-5' exonuclease proofreading activities. The polymerase is tethered to the template via the dimeric beta sliding clamp processivity factor. The DNA clamp-loading complex assembles the beta sliding clamp onto the primed template and plays a central role in the organization and communication at the replication fork.

It localises to the cytoplasm. Its subcellular location is the nucleoid. The enzyme catalyses DNA(n) + a 2'-deoxyribonucleoside 5'-triphosphate = DNA(n+1) + diphosphate. Functionally, part of the beta sliding clamp loading complex, which hydrolyzes ATP to load the beta clamp onto primed DNA to form the DNA replication pre-initiation complex. DNA polymerase III is a complex, multichain enzyme responsible for most of the replicative synthesis in bacteria. This DNA polymerase also exhibits 3'-5' exonuclease activity. The delta subunit is the wrench that will open the beta subunit dimer. The DNA clamp loading complex (tau(3),delta,delta') is thought to load beta dimers onto DNA by binding ATP which alters the complex's conformation so it can bind beta sliding clamp dimers and open them at one interface. Primed DNA is recognized, ATP is hydrolyzed releasing the clamp loading complex and closing the beta sliding clamp ring around the primed DNA. In Bacillus subtilis (strain 168), this protein is DNA polymerase III subunit delta.